The sequence spans 100 residues: Protein RnfH (100 aa).

The protein belongs to the UPF0125 (RnfH) family.

This Actinobacillus succinogenes (strain ATCC 55618 / DSM 22257 / CCUG 43843 / 130Z) protein is Protein RnfH.